Consider the following 339-residue polypeptide: Glycerol-3-phosphate dehydrogenase [NAD(P)+] (339 aa).

Residues Ser13, Trp14, and Lys108 each contribute to the NADPH site. Residues Lys108, Gly139, and Ser141 each coordinate sn-glycerol 3-phosphate. Ala143 contributes to the NADPH binding site. Positions 194, 247, 257, 258, and 259 each coordinate sn-glycerol 3-phosphate. The active-site Proton acceptor is Lys194. Arg258 contacts NADPH. Residues Val282 and Glu284 each contribute to the NADPH site.

The protein belongs to the NAD-dependent glycerol-3-phosphate dehydrogenase family.

The protein localises to the cytoplasm. It catalyses the reaction sn-glycerol 3-phosphate + NAD(+) = dihydroxyacetone phosphate + NADH + H(+). The catalysed reaction is sn-glycerol 3-phosphate + NADP(+) = dihydroxyacetone phosphate + NADPH + H(+). It participates in membrane lipid metabolism; glycerophospholipid metabolism. Its function is as follows. Catalyzes the reduction of the glycolytic intermediate dihydroxyacetone phosphate (DHAP) to sn-glycerol 3-phosphate (G3P), the key precursor for phospholipid synthesis. In Streptococcus equi subsp. zooepidemicus (strain H70), this protein is Glycerol-3-phosphate dehydrogenase [NAD(P)+].